A 356-amino-acid chain; its full sequence is UDP-N-acetylglucosamine--N-acetylmuramyl-(pentapeptide) pyrophosphoryl-undecaprenol N-acetylglucosamine transferase (356 aa).

Residues Thr-11 to Gly-13, Asn-123, Arg-159, and Ser-192 contribute to the UDP-N-acetyl-alpha-D-glucosamine site.

The protein belongs to the glycosyltransferase 28 family. MurG subfamily.

The protein resides in the cell membrane. It carries out the reaction di-trans,octa-cis-undecaprenyl diphospho-N-acetyl-alpha-D-muramoyl-L-alanyl-D-glutamyl-meso-2,6-diaminopimeloyl-D-alanyl-D-alanine + UDP-N-acetyl-alpha-D-glucosamine = di-trans,octa-cis-undecaprenyl diphospho-[N-acetyl-alpha-D-glucosaminyl-(1-&gt;4)]-N-acetyl-alpha-D-muramoyl-L-alanyl-D-glutamyl-meso-2,6-diaminopimeloyl-D-alanyl-D-alanine + UDP + H(+). The protein operates within cell wall biogenesis; peptidoglycan biosynthesis. Cell wall formation. Catalyzes the transfer of a GlcNAc subunit on undecaprenyl-pyrophosphoryl-MurNAc-pentapeptide (lipid intermediate I) to form undecaprenyl-pyrophosphoryl-MurNAc-(pentapeptide)GlcNAc (lipid intermediate II). The chain is UDP-N-acetylglucosamine--N-acetylmuramyl-(pentapeptide) pyrophosphoryl-undecaprenol N-acetylglucosamine transferase from Tropheryma whipplei (strain Twist) (Whipple's bacillus).